We begin with the raw amino-acid sequence, 443 residues long: 3-phosphoshikimate 1-carboxyvinyltransferase (443 aa).

3 residues coordinate 3-phosphoshikimate: K24, S25, and R29. K24 lines the phosphoenolpyruvate pocket. Phosphoenolpyruvate is bound by residues G95 and R123. The 3-phosphoshikimate site is built by S167, Q169, D323, and K350. Q169 is a phosphoenolpyruvate binding site. D323 (proton acceptor) is an active-site residue. 2 residues coordinate phosphoenolpyruvate: R354 and R398.

It belongs to the EPSP synthase family. Monomer.

Its subcellular location is the cytoplasm. The enzyme catalyses 3-phosphoshikimate + phosphoenolpyruvate = 5-O-(1-carboxyvinyl)-3-phosphoshikimate + phosphate. The protein operates within metabolic intermediate biosynthesis; chorismate biosynthesis; chorismate from D-erythrose 4-phosphate and phosphoenolpyruvate: step 6/7. Its function is as follows. Catalyzes the transfer of the enolpyruvyl moiety of phosphoenolpyruvate (PEP) to the 5-hydroxyl of shikimate-3-phosphate (S3P) to produce enolpyruvyl shikimate-3-phosphate and inorganic phosphate. The chain is 3-phosphoshikimate 1-carboxyvinyltransferase from Caulobacter vibrioides (strain ATCC 19089 / CIP 103742 / CB 15) (Caulobacter crescentus).